Consider the following 629-residue polypeptide: Long-chain-fatty-acid--AMP ligase FadD32 (629 aa).

ATP contacts are provided by residues 186–191 (TSGSTR), Ser-341, Ala-345, Asp-468, and Arg-482.

Belongs to the ATP-dependent AMP-binding enzyme family. In terms of assembly, monomer.

It carries out the reaction a long-chain fatty acid + holo-[ACP] + ATP = a long-chain fatty acyl-[ACP] + AMP + diphosphate. The catalysed reaction is dodecanoate + ATP + H(+) = dodecanoyl-AMP + diphosphate. The enzyme catalyses tetradecanoate + ATP + H(+) = tetradecanoyl-AMP + diphosphate. It functions in the pathway lipid metabolism; mycolic acid biosynthesis. Its activity is regulated as follows. The acyl-AMP ligase activity is inhibited by the alkylphosphate esters of AMP, adenosine 50-dodecylphosphate (AMPC12) and eicosyl-AMP (AMPC20). In terms of biological role, involved in the biosynthesis of mycolic acids. Catalyzes the activation of long-chain fatty acids as acyl-adenylates (acyl-AMP), which are then transferred to the phosphopantetheine arm of the polyketide synthase Pks13 for further chain extension. Can use dodecanoate (C12) and tetradecanoate (C14). This is Long-chain-fatty-acid--AMP ligase FadD32 (fadD32) from Mycobacterium marinum (strain ATCC BAA-535 / M).